The chain runs to 282 residues: ATP phosphoribosyltransferase (282 aa).

The protein belongs to the ATP phosphoribosyltransferase family. Long subfamily. Requires Mg(2+) as cofactor.

It is found in the cytoplasm. It carries out the reaction 1-(5-phospho-beta-D-ribosyl)-ATP + diphosphate = 5-phospho-alpha-D-ribose 1-diphosphate + ATP. The protein operates within amino-acid biosynthesis; L-histidine biosynthesis; L-histidine from 5-phospho-alpha-D-ribose 1-diphosphate: step 1/9. Feedback inhibited by histidine. In terms of biological role, catalyzes the condensation of ATP and 5-phosphoribose 1-diphosphate to form N'-(5'-phosphoribosyl)-ATP (PR-ATP). Has a crucial role in the pathway because the rate of histidine biosynthesis seems to be controlled primarily by regulation of HisG enzymatic activity. This chain is ATP phosphoribosyltransferase, found in Saccharopolyspora erythraea (strain ATCC 11635 / DSM 40517 / JCM 4748 / NBRC 13426 / NCIMB 8594 / NRRL 2338).